A 115-amino-acid chain; its full sequence is Chaperone protein PrsD (115 aa).

This sequence belongs to the periplasmic pilus chaperone family.

Its subcellular location is the periplasm. Its function is as follows. Mediates assembly of pili by forming soluble multimeric complexes with pili subunits as an intermediate step in the assembly process. This is Chaperone protein PrsD (prsD) from Escherichia coli.